The primary structure comprises 1229 residues: uncharacterized protein (1229 aa).

The first 19 residues, 1–19 (MKYFLLLFLLVLSFTLVES), serve as a signal peptide directing secretion. Residues asparagine 238, asparagine 270, asparagine 370, asparagine 538, asparagine 691, and asparagine 701 are each glycosylated (N-linked (GlcNAc...) asparagine). Positions 678–813 (RMVNFANVME…QWNIDTVKMN (136 aa)) constitute a Galectin 1 domain. The segment covering 818 to 829 (HTTTVEPSTPLE) has biased composition (polar residues). The disordered stretch occupies residues 818–903 (HTTTVEPSTP…TLPPTTTPYN (86 aa)). Low complexity predominate over residues 830 to 846 (TASTSQSTPSATLTSTT). Positions 847–869 (ENIPSTSKIPETSTTQRPTSPIL) are enriched in polar residues. Positions 870–901 (TSGATSTSSSTESTTTSPTTSTTTTLPPTTTP) are enriched in low complexity. N-linked (GlcNAc...) asparagine glycans are attached at residues asparagine 903, asparagine 938, and asparagine 948. Positions 925-1059 (RPVVFSRYME…ESTIDTVSMA (135 aa)) constitute a Galectin 2 domain. The disordered stretch occupies residues 1061 to 1087 (VRPPTTPTTTTSTTTTTTPKLTTTSTL). Residues 1067–1087 (PTTTTSTTTTTTPKLTTTSTL) are compositionally biased toward low complexity. N-linked (GlcNAc...) asparagine glycosylation occurs at asparagine 1146.

This is an uncharacterized protein from Caenorhabditis elegans.